We begin with the raw amino-acid sequence, 590 residues long: Probable serine/threonine-protein phosphatase PP2A regulatory subunit (590 aa).

HEAT repeat units follow at residues 37–73 (LSTIALALGVERTRNELIQFLTDTIYDEDEVLLVLAE), 74–111 (QLGNFTPLVGGPDHVHCLLLPLENLATVEETVVRDKAV), 113–150 (SLRKIADKHSSASLEEHFVPMLRRLATGDWFTSRTSAC), 151–188 (GLFSVVYPRVSPAIKSELKSMFRTLCRDDTPMVRRAAA), 189–227 (AKLGEFAKVFEKTAVIEGLHSSLTDLHVDEQDSVRLLTV), 228–266 (ESAIAFGTLLDKANKKKLIEPILIELFDDKSWRVRYMVA), 267–305 (EKLIEIQNVLGEDMDTTHLVNMYTNLLKDPEGEVRCAAT), 306–344 (QRLQEFALNLPEDKRQNIICNSLLNVAKELVTDGNQLVK), 349–387 (GVIMGLAPLIGKEQTVSELLPIYMQLLNDQTPEVRLNII), 388–426 (SSLDKVNEVIGAAQLSTSLLPAIVGLAEDGKWRVRLAIV), 427–465 (QFMPLLASQLGQEFFDEKLLPLCLNWLTDHVFSIREAST), 466–504 (LIMKELTQKFGGQWASTNIVPKMQKLQKDTNYLQRMTCL), 505–543 (FCLNTLSEAMTQEQILKEIMPIVKDLVEDDVPNVRFNAA), and 544–582 (KSLKRIGKNLTPSTLTSEVKPLLEKLGKDSDFDVRYFSE).

The protein belongs to the phosphatase 2A regulatory subunit A family. In terms of assembly, part of a complex consisting of a common heterodimeric core enzyme, composed of catalytic subunit let-92 and constant regulatory subunit paa-1, that associates with a variety of regulatory subunits which confer distinct properties to the holoenzyme. Interacts with rsa-1.

It localises to the cytoplasm. It is found in the cytoskeleton. The protein localises to the microtubule organizing center. The protein resides in the centrosome. Its subcellular location is the spindle. Its function is as follows. Acts as a scaffolding protein for phosphatase let-92 and its regulatory subunits. Probably together with let-92 and regulatory subunit sur-6, regulates centriole duplication, microtubule outgrowth and mitotic spindle stability during early embryonic cell division by preventing the degradation of sas-5 and kinase zyg-1. During vulva development, may play a role with phosphatase let-92 and regulatory subunit sur-6 in the induction of vulva cell precursors by positively regulating let-60/Ras-MAP kinase signaling, probably by promoting lin-45 activation. Plays a positive role in axon guidance probably by inhibiting phosphatase let-92. In Caenorhabditis elegans, this protein is Probable serine/threonine-protein phosphatase PP2A regulatory subunit (paa-1).